The sequence spans 269 residues: Diphthine synthase (269 aa).

Residues Leu-10, Asp-87, Val-90, Ser-115–Ile-116, Leu-166, Ala-209, and His-234 contribute to the S-adenosyl-L-methionine site.

It belongs to the diphthine synthase family. As to quaternary structure, homodimer.

It carries out the reaction 2-[(3S)-amino-3-carboxypropyl]-L-histidyl-[translation elongation factor 2] + 3 S-adenosyl-L-methionine = diphthine-[translation elongation factor 2] + 3 S-adenosyl-L-homocysteine + 3 H(+). It participates in protein modification; peptidyl-diphthamide biosynthesis. Functionally, S-adenosyl-L-methionine-dependent methyltransferase that catalyzes the trimethylation of the amino group of the modified target histidine residue in translation elongation factor 2 (EF-2), to form an intermediate called diphthine. The three successive methylation reactions represent the second step of diphthamide biosynthesis. The chain is Diphthine synthase from Pyrococcus furiosus (strain ATCC 43587 / DSM 3638 / JCM 8422 / Vc1).